The chain runs to 95 residues: Small ribosomal subunit protein bS16 (95 aa).

It belongs to the bacterial ribosomal protein bS16 family.

This is Small ribosomal subunit protein bS16 from Streptococcus pneumoniae (strain CGSP14).